A 218-amino-acid polypeptide reads, in one-letter code: UPF0502 protein Geob_1184 (218 aa).

Belongs to the UPF0502 family.

In Geotalea daltonii (strain DSM 22248 / JCM 15807 / FRC-32) (Geobacter daltonii), this protein is UPF0502 protein Geob_1184.